Consider the following 1217-residue polypeptide: Disease resistance protein RPS4 (1217 aa).

Positions 14–175 (PQHQVFINFR…EIVKAVKTAL (162 aa)) constitute a TIR domain. Glu-88 is a catalytic residue. Residues 211 to 472 (EQRLKDLEEK…FRSQDKDYVE (262 aa)) enclose the NB-ARC domain. LRR repeat units lie at residues 260–285 (HALIDQIRVKSKHLELDRLPQMLLGE), 436–459 (PNIVSVFQVSYDELTTAQKDAFLD), 614–636 (LKEVRCLHWLKFPLETLPNDFNP), 637–659 (INLVDLKLPYSEMEQLWEGDKDT), 682–706 (AEKLQRLNLEGCTTLKAFPHDMKKM), 708–728 (MLAFLNLKGCTSLESLPEMNL), 729–749 (ISLKTLTLSGCSTFKEFPLIS), 750–774 (DNIETLYLDGTAISQLPMNMEKLQR), 796–818 (LKALQELILSDCLNLKIFPEIDI), 819–842 (SFLNILLLDGTAIEVMPQLPSVQY), and 861–887 (LSQLKWLDLKYCTSLTSVPEFPPNLQC). Residues 1162–1195 (TEGVDGRVKKKKKTRMDNGRPKKKQRSGRDDNQT) are disordered. The Nuclear localization signal signature appears at 1170–1177 (KKKKKTRM).

In terms of assembly, interacts with EDS1.

Its subcellular location is the nucleus. It carries out the reaction NAD(+) + H2O = ADP-D-ribose + nicotinamide + H(+). In terms of biological role, disease resistance (R) protein that specifically recognizes the AvrRps4 type III effector avirulence protein from Pseudomonas syringae. Resistance proteins guard the plant against pathogens that contain an appropriate avirulence protein via an indirect interaction with this avirulence protein. That triggers a defense system including the hypersensitive response, which restricts the pathogen growth. The combined presence of both regular and alternative RPS4 transcripts with truncated open reading frames (ORFs) is necessary for function. RPS4 function is regulated at multiple levels, including gene expression, alternative splicing, and protein stability. Acts as a disease resistance protein involved in resistance to fungal and bacterial pathogens, including R.solanacearum, P.syringae pv. tomato and C.higginsianum. In presence of RRS1, elicites an EDS1-dependent hypersensitive response. In Arabidopsis thaliana (Mouse-ear cress), this protein is Disease resistance protein RPS4.